A 369-amino-acid chain; its full sequence is mRNA cap guanine-N(7) methyltransferase 1 (369 aa).

Residues 1–55 are disordered; the sequence is MNKRPRDEPSSSFASAPKRQYGAGGGGYGGHGYSEERSSARRVADHYSARSNQTL. Over residues 22 to 32 the composition is skewed to gly residues; the sequence is GAGGGGYGGHG. The span at 33–48 shows a compositional bias: basic and acidic residues; the sequence is YSEERSSARRVADHYS. One can recognise an mRNA cap 0 methyltransferase domain in the interval 61-340; the sequence is SPIIHLKKLN…LYLAFVLRKR (280 aa). Position 70–71 (70–71) interacts with mRNA; it reads NN. Residues Lys-74, Ala-92, Asp-114, 149–150, and 171–173 each bind S-adenosyl-L-methionine; these read DC and QFA.

Belongs to the class I-like SAM-binding methyltransferase superfamily. mRNA cap 0 methyltransferase family.

Its subcellular location is the nucleus. The enzyme catalyses a 5'-end (5'-triphosphoguanosine)-ribonucleoside in mRNA + S-adenosyl-L-methionine = a 5'-end (N(7)-methyl 5'-triphosphoguanosine)-ribonucleoside in mRNA + S-adenosyl-L-homocysteine. Functionally, mRNA-capping methyltransferase that methylates the N7 position of the added guanosine to the 5'-cap structure of mRNAs. Binds RNA containing 5'-terminal GpppC. This is mRNA cap guanine-N(7) methyltransferase 1 from Oryza sativa subsp. japonica (Rice).